Reading from the N-terminus, the 507-residue chain is Cystathionine beta-synthase (507 aa).

Residue lysine 53 is modified to N6-(pyridoxal phosphate)lysine. Asparagine 84 contacts pyridoxal 5'-phosphate. Serine 134 carries the post-translational modification Phosphoserine. Pyridoxal 5'-phosphate-binding positions include glycine 196–threonine 200 and serine 289. 2 positions are modified to phosphoserine: serine 350 and serine 424. In terms of domain architecture, CBS spans histidine 373–asparagine 432.

The protein belongs to the cysteine synthase/cystathionine beta-synthase family. Pyridoxal 5'-phosphate is required as a cofactor.

The catalysed reaction is L-homocysteine + L-serine = L,L-cystathionine + H2O. It participates in amino-acid biosynthesis; L-cysteine biosynthesis; L-cysteine from L-homocysteine and L-serine: step 1/2. This Saccharomyces cerevisiae (strain ATCC 204508 / S288c) (Baker's yeast) protein is Cystathionine beta-synthase (CYS4).